A 359-amino-acid chain; its full sequence is Probable deacetylase AF_0130 (359 aa).

H126 functions as the Proton donor/acceptor in the catalytic mechanism. Zn(2+)-binding residues include D162, H164, and D249.

The protein belongs to the histone deacetylase family. It depends on Zn(2+) as a cofactor.

In terms of biological role, probable deacetylase. The protein is Probable deacetylase AF_0130 of Archaeoglobus fulgidus (strain ATCC 49558 / DSM 4304 / JCM 9628 / NBRC 100126 / VC-16).